The sequence spans 519 residues: Sorting nexin-2 (519 aa).

Residues 30–50 (STVSTLESSPSSPEPASLPAE) are compositionally biased toward low complexity. The segment at 30–62 (STVSTLESSPSSPEPASLPAEDISANSNGSKPV) is disordered. Ser97 bears the Phosphoserine mark. Residues Thr101 and Thr104 each carry the phosphothreonine modification. Ser117 and Ser119 each carry phosphoserine. In terms of domain architecture, PX spans 140–269 (FDIEIGVSDP…QFLESSELPR (130 aa)). A 1,2-diacyl-sn-glycero-3-phospho-(1D-myo-inositol-3-phosphate) contacts are provided by Arg183, Ser185, Lys211, and Arg235. Ser185 carries the phosphoserine modification. Residues 260–519 (QFLESSELPR…AFLPEAKAIA (260 aa)) are interaction with RhoG. Residue Ser277 is modified to Phosphoserine. The interval 278–295 (GAGILRMVNKAADAVNKM) is membrane-binding amphipathic helix. The BAR domain maps to 299–519 (MNESDAWFEE…AFLPEAKAIA (221 aa)). Residue Lys469 is modified to N6-acetyllysine.

Belongs to the sorting nexin family. In terms of assembly, predominantly forms heterodimers with BAR domain-containing sorting nexins SNX5, SNX6 and SNX32; can self-associate to form homodimers. The heterodimers are proposed to self-assemble into helical arrays on the membrane to stabilize and expand local membrane curvature underlying endosomal tubule formation. Thought to be a component of the originally described retromer complex (also called SNX-BAR retromer) which is a pentamer containing the heterotrimeric retromer cargo-selective complex (CSC), also described as vacuolar protein sorting subcomplex (VPS), and a heterodimeric membrane-deforming subcomplex formed between SNX1 or SNX2 and SNX5 or SNX6 (also called SNX-BAR subcomplex); the respective CSC and SNX-BAR subcomplexes associate with low affinity. Interacts with SNX5, SNX6, SNX32, VPS26A, VPS29, VPS35, FNBP1, KALRN, RHOG (GDP-bound form).

The protein localises to the early endosome membrane. Its subcellular location is the cell projection. It localises to the lamellipodium. Involved in several stages of intracellular trafficking. Interacts with membranes containing phosphatidylinositol 3-phosphate (PtdIns(3P)) or phosphatidylinositol 3,5-bisphosphate (PtdIns(3,5)P2). Acts in part as component of the retromer membrane-deforming SNX-BAR subcomplex. The SNX-BAR retromer mediates retrograde transport of cargo proteins from endosomes to the trans-Golgi network (TGN) and is involved in endosome-to-plasma membrane transport for cargo protein recycling. The SNX-BAR subcomplex functions to deform the donor membrane into a tubular profile called endosome-to-TGN transport carrier (ETC). Can sense membrane curvature and has in vitro vesicle-to-membrane remodeling activity. Required for retrograde endosome-to-TGN transport of TGN38. Promotes KALRN- and RHOG-dependent but retromer-independent membrane remodeling such as lamellipodium formation; the function is dependent on GEF activity of KALRN. In Mus musculus (Mouse), this protein is Sorting nexin-2 (Snx2).